A 137-amino-acid chain; its full sequence is UPF0768 protein C1952.04c (137 aa).

The span at 79–93 shows a compositional bias: basic and acidic residues; the sequence is QRRRREDLPTPERPE. The segment at 79–137 is disordered; sequence QRRRREDLPTPERPEASAQQHAFFPGSSSQQTDIPNVRPQPHIPPPRKSDEAPPPYSYK. A compositionally biased stretch (pro residues) spans 119–137; the sequence is PHIPPPRKSDEAPPPYSYK.

It belongs to the UPF0768 family.

The polypeptide is UPF0768 protein C1952.04c (Schizosaccharomyces pombe (strain 972 / ATCC 24843) (Fission yeast)).